The following is a 722-amino-acid chain: Phenylalanine ammonia-lyase lenB (722 aa).

Tyr-83 acts as the Proton donor/acceptor in catalysis. The segment at 117–136 is disordered; the sequence is LPTDRSSSRPSSRYPHGLRS. The 5-imidazolinone (Ala-Gly) cross-link spans 190–192; that stretch reads ASG. Ser-191 is subject to 2,3-didehydroalanine (Ser). Residues Asn-247, Gln-334, Arg-340, Asn-370, Lys-441, Glu-469, and Asn-472 each coordinate (E)-cinnamate.

It belongs to the PAL/histidase family. Contains an active site 4-methylidene-imidazol-5-one (MIO), which is formed autocatalytically by cyclization and dehydration of residues Ala-Ser-Gly.

It carries out the reaction L-phenylalanine = (E)-cinnamate + NH4(+). It functions in the pathway alkaloid biosynthesis. Its function is as follows. Phenylalanine ammonia-lyase; part of the gene cluster that mediates the biosynthesis of the ergot alkaloids lentopeptins A and B. Within the pathway, lenB provides the cinnamic acid starter unit for the synthesis of the N-acyldiketopiperazine intermediate by the NRPS lenA. Cinnamic acid is condensed with the Ala-Val-Ala peptide chain by lenA which leads to the N-acyldiketopiperazine intermediate which in turn is converted into lentopeptins A and B by the cytochrome P450 monooxygenase lenC. This chain is Phenylalanine ammonia-lyase lenB, found in Aspergillus lentulus.